The primary structure comprises 213 residues: Heavy metal-binding protein HIP (213 aa).

One can recognise a C1q domain in the interval 80 to 213 (FKSHHVAFSA…MSTFTGFMLH (134 aa)).

As to expression, pallium, gill and liver.

Its subcellular location is the secreted. In terms of biological role, binds heavy metals. May function as a carrier of divalent cations in plasma. This Mytilus edulis (Blue mussel) protein is Heavy metal-binding protein HIP.